The sequence spans 111 residues: MAKGGFPGGFNINNMIKQAQQMQEEIKKMQEELMQKTVEATVGGGMVKAVANGRKELVSIEINPAVVDKDDVETLEDLVLAAVNQALRNAEEMIASEMAKITGGLNIPGLF.

The protein belongs to the YbaB/EbfC family. In terms of assembly, homodimer.

It localises to the cytoplasm. The protein resides in the nucleoid. Binds to DNA and alters its conformation. May be involved in regulation of gene expression, nucleoid organization and DNA protection. The polypeptide is Nucleoid-associated protein Teth514_0034 (Thermoanaerobacter sp. (strain X514)).